Consider the following 443-residue polypeptide: Exodeoxyribonuclease 7 large subunit (443 aa).

Belongs to the XseA family. As to quaternary structure, heterooligomer composed of large and small subunits.

The protein localises to the cytoplasm. The enzyme catalyses Exonucleolytic cleavage in either 5'- to 3'- or 3'- to 5'-direction to yield nucleoside 5'-phosphates.. In terms of biological role, bidirectionally degrades single-stranded DNA into large acid-insoluble oligonucleotides, which are then degraded further into small acid-soluble oligonucleotides. The protein is Exodeoxyribonuclease 7 large subunit of Vibrio vulnificus (strain CMCP6).